Consider the following 627-residue polypeptide: Nuclear receptor subfamily 4 group A member 3 (627 aa).

The interval 1–112 (MPCVQAQYSP…HHHHHHHHHQ (112 aa)) is activation function (AF)-1 domain. The interval 1 to 139 (MPCVQAQYSP…PSTSMYFKQS (139 aa)) is required for DNA-PK heterotrimer. Residues 1-292 (MPCVQAQYSP…NRSSSSGEGT (292 aa)) form an interaction with NCOA1, NCOA2, NCOA3 and KAT2B region. 2 disordered regions span residues 96-162 (HGYH…DELP) and 268-289 (ASSL…SSSG). Over residues 97–112 (GYHHHHHHHHHHHHHQ) the composition is skewed to basic residues. Residues 141 to 150 (PSTPTTPGFP) show a composition bias toward pro residues. The segment covering 269–288 (SSLLGESPSLPSPPNRSSSS) has biased composition (low complexity). The segment at residues 290 to 365 (EGTCAVCGDN…VGMVKEVVRT (76 aa)) is a DNA-binding region (nuclear receptor). NR C4-type zinc fingers lie at residues 293-313 (CAVC…CEGC) and 329-353 (CLAN…FQKC). The disordered stretch occupies residues 365–395 (TDSLKGRRGRLPSKPKSPLQQEPSQPSPPSP). Positions 378 to 388 (KPKSPLQQEPS) are enriched in low complexity. The interval 380–627 (KSPLQQEPSQ…DKLFLDTLPF (248 aa)) is interaction with KAT2B. An NR LBD domain is found at 395-624 (PPICMMNALV…SVIDKLFLDT (230 aa)).

This sequence belongs to the nuclear hormone receptor family. NR4 subfamily. As to quaternary structure, interacts with SIX3 (via homeobox); differentially regulates the transcriptional activities of NR4A3. Interacts with NCOA2; potentiates the activity of the NR4A3. Interacts with NCOA1, NCOA3, MED1 and KAT2B. Interacts with EP300 and NCOA2; mediates the recruitment of MED1 in the coactivator complex. Interacts with the constituents of DNA-PK heterotrimer PRKDC, XRCC6 and XRCC5; phosphorylates and prevents NR4A3 ubiquitinylation and degradation. Interacts with NR3C1 (via nuclear receptor DNA-binding domain); the interactions represses transcription activity of NR4A3 on the POMC promoter Nur response element (NurRE). Interacts with TRIM28; the interactions potentiates NR4A3 activity on NurRE promoter. Binds DNA as a monomer and homodimer. Interacts with PARP1; activates PARP1 by improving acetylation of PARP1 and suppressing the interaction between PARP1 and SIRT1. Phosphorylated by PRKDC. In terms of tissue distribution, ubiquitous. Highest levels of expression in brain. Widely expressed throughout the arcuate nucleus region of the hypothalamus, namely in AgRP neurons.

It is found in the nucleus. Its function is as follows. Transcriptional activator that binds to regulatory elements in promoter regions in a cell- and response element (target)-specific manner. Induces gene expression by binding as monomers to the NR4A1 response element (NBRE) 5'-AAAAGGTCA-3' site and as homodimers to the Nur response element (NurRE) site in the promoter of their regulated target genes. Plays a role in the regulation of proliferation, survival and differentiation of many different cell types and also in metabolism and inflammation. Mediates proliferation of vascular smooth muscle, myeloid progenitor cell and type B pancreatic cells; promotes mitogen-induced vascular smooth muscle cell proliferation through transactivation of SKP2 promoter by binding a NBRE site. Upon PDGF stimulation, stimulates vascular smooth muscle cell proliferation by regulating CCND1 and CCND2 expression. In islets, induces type B pancreatic cell proliferation through up-regulation of genes that activate cell cycle, as well as genes that cause degradation of the CDKN1A. Negatively regulates myeloid progenitor cell proliferation by repressing RUNX1 in a NBRE site-independent manner. During inner ear, plays a role as a key mediator of the proliferative growth phase of semicircular canal development. Also mediates survival of neuron and smooth muscle cells; mediates CREB-induced neuronal survival, and during hippocampus development, plays a critical role in pyramidal cell survival and axonal guidance. Is required for S phase entry of the cell cycle and survival of smooth muscle cells by inducing CCND1, resulting in RB1 phosphorylation. Binds to NBRE motif in CCND1 promoter, resulting in the activation of the promoter and CCND1 transcription. Also plays a role in inflammation; upon TNF stimulation, mediates monocyte adhesion by inducing the expression of VCAM1 and ICAM1 by binding to the NBRE consensus site. In mast cells activated by Fc-epsilon receptor cross-linking, promotes the synthesis and release of cytokines but impairs events leading to degranulation. Also plays a role in metabolism; by modulating feeding behavior; and by playing a role in energy balance by inhibiting the glucocorticoid-induced orexigenic neuropeptides AGRP expression, at least in part by forming a complex with activated NR3C1 on the AGRP- glucocorticoid response element (GRE), and thus weakening the DNA binding activity of NR3C1. Upon catecholamines stimulation, regulates gene expression that controls oxidative metabolism in skeletal muscle. Plays a role in glucose transport by regulating translocation of the SLC2A4 glucose transporter to the cell surface. Finally, during gastrulation plays a crucial role in the formation of anterior mesoderm by controlling cell migration. Inhibits adipogenesis. Also participates in cardiac hypertrophy by activating PARP1. This Mus musculus (Mouse) protein is Nuclear receptor subfamily 4 group A member 3 (Nr4a3).